Reading from the N-terminus, the 502-residue chain is MIEKKYIVALDQGTTSSRAIILDHDANIISISQREFTQIYPKPGWVEHDPMEIWATQSSTLVEVLAKADISSDQIAGIGITNQRETTIIWEKETGKPIYNAIVWQCRRTADACTKLKQKEGLEEYIRQNTGLVVDPYFSGTKVKWILDNVAGARERAEKGELLFGTVDTWLVWKMTQGRVHVTDFTNASRTMLFNIHNLEWDQHILDELQIPRSLLPSVHSSSEIYGQTNIGGKGGTRIPISGIAGDQQAALYGQLCVQPGMAKNTYGTGCFLLMNTGTDAVRSNHGLLTTIACGPRGEVNYALEGAVFVGGASIQWLRDELKLIADAADSEYFATKVKNSNGVYVVPAFTGLGAPYWDPYARGSIFGLTRGTNSNHIIRATLESIAYQTRDVLDAMQADAGTRLQALRVDGGAVANNFLMQFQSDILGTRVERPVVRESTALGAAFLAGLAVGYWKDLDEVKSKATIEKEFRPGIETTERNYKYNGWKKAVARAQDWEDKG.

Residue Thr-14 coordinates ADP. ATP contacts are provided by Thr-14, Thr-15, and Ser-16. Residue Thr-14 coordinates sn-glycerol 3-phosphate. Arg-18 provides a ligand contact to ADP. Sn-glycerol 3-phosphate-binding residues include Arg-84, Glu-85, Tyr-137, and Asp-247. Positions 84, 85, 137, 247, and 248 each coordinate glycerol. The ADP site is built by Thr-269 and Gly-312. Residues Thr-269, Gly-312, Gln-316, and Gly-413 each coordinate ATP. The ADP site is built by Gly-413 and Asn-417.

Belongs to the FGGY kinase family. In terms of assembly, homotetramer and homodimer (in equilibrium). Heterodimer with EIIA-Glc. Binds 1 zinc ion per glycerol kinase EIIA-Glc dimer. The zinc ion is important for dimerization.

The catalysed reaction is glycerol + ATP = sn-glycerol 3-phosphate + ADP + H(+). It functions in the pathway polyol metabolism; glycerol degradation via glycerol kinase pathway; sn-glycerol 3-phosphate from glycerol: step 1/1. Activity of this regulatory enzyme is affected by several metabolites. Allosterically and non-competitively inhibited by fructose 1,6-bisphosphate (FBP) and unphosphorylated phosphocarrier protein EIIA-Glc (III-Glc), an integral component of the bacterial phosphotransferase (PTS) system. Its function is as follows. Key enzyme in the regulation of glycerol uptake and metabolism. Catalyzes the phosphorylation of glycerol to yield sn-glycerol 3-phosphate. In Photorhabdus laumondii subsp. laumondii (strain DSM 15139 / CIP 105565 / TT01) (Photorhabdus luminescens subsp. laumondii), this protein is Glycerol kinase.